Here is a 326-residue protein sequence, read N- to C-terminus: L-lactate dehydrogenase (326 aa).

Residues V26, D47, K52, Y78, and 92–93 (GA) each bind NAD(+). The substrate site is built by Q95 and R101. Residues T114, 131–133 (ASN), and S156 contribute to the NAD(+) site. Residue 133–136 (NPVD) participates in substrate binding. 161-164 (DTAR) serves as a coordination point for substrate. Beta-D-fructose 1,6-bisphosphate is bound by residues R166 and H181. H188 functions as the Proton acceptor in the catalytic mechanism. Y233 bears the Phosphotyrosine mark. Residue T242 coordinates substrate.

It belongs to the LDH/MDH superfamily. LDH family. In terms of assembly, homotetramer.

It localises to the cytoplasm. It catalyses the reaction (S)-lactate + NAD(+) = pyruvate + NADH + H(+). It participates in fermentation; pyruvate fermentation to lactate; (S)-lactate from pyruvate: step 1/1. With respect to regulation, allosterically activated by fructose 1,6-bisphosphate (FBP). Its function is as follows. Catalyzes the conversion of lactate to pyruvate. The sequence is that of L-lactate dehydrogenase from Corynebacterium jeikeium (strain K411).